Reading from the N-terminus, the 77-residue chain is Small ribosomal subunit protein bS21 (77 aa).

The tract at residues 55-77 is disordered; sequence RKLARKRAQREGLMSNGRISALR.

It belongs to the bacterial ribosomal protein bS21 family.

This Bartonella quintana (strain Toulouse) (Rochalimaea quintana) protein is Small ribosomal subunit protein bS21.